A 729-amino-acid polypeptide reads, in one-letter code: Solute carrier family 15 member 2 (729 aa).

Positions methionine 1–threonine 34 are disordered. The Cytoplasmic portion of the chain corresponds to methionine 1–arginine 57. Serine 9 carries the post-translational modification Phosphoserine. Threonine 12 carries the post-translational modification Phosphothreonine. Residue serine 28 is modified to Phosphoserine. A helical membrane pass occupies residues phenylalanine 58–asparagine 78. The Extracellular portion of the chain corresponds to glutamate 79–histidine 87. A helical transmembrane segment spans residues alanine 88–leucine 108. Topologically, residues glycine 109 to threonine 113 are cytoplasmic. Residues isoleucine 114 to proline 134 form a helical membrane-spanning segment. Topologically, residues isoleucine 135–lysine 139 are extracellular. A helical membrane pass occupies residues methionine 140 to isoleucine 160. Residues lysine 161–tyrosine 183 are Cytoplasmic-facing. A helical membrane pass occupies residues phenylalanine 184 to methionine 204. Residues leucine 205–tyrosine 217 are Extracellular-facing. Residues alanine 218 to glycine 238 traverse the membrane as a helical segment. Residues serine 239–aspartate 295 lie on the Cytoplasmic side of the membrane. The helical transmembrane segment at valine 296 to leucine 316 threads the bilayer. Topologically, residues aspartate 317–glutamine 343 are extracellular. A helical membrane pass occupies residues methionine 344–tyrosine 364. Over arginine 365–methionine 380 the chain is Cytoplasmic. The chain crosses the membrane as a helical span at residues alanine 381–isoleucine 401. Residues asparagine 402–glutamine 611 lie on the Extracellular side of the membrane. Positions asparagine 402 to glutamine 611 are extracellular domain (ECD). Residues asparagine 448, asparagine 472, asparagine 528, and asparagine 587 are each glycosylated (N-linked (GlcNAc...) asparagine). Residues leucine 612 to phenylalanine 632 form a helical membrane-spanning segment. Residues serine 633 to serine 643 are Cytoplasmic-facing. A helical membrane pass occupies residues valine 644–alanine 664. At glutamine 665–glutamate 674 the chain is on the extracellular side. A helical transmembrane segment spans residues phenylalanine 675 to tyrosine 695. Residues tyrosine 696–leucine 729 are Cytoplasmic-facing.

This sequence belongs to the major facilitator superfamily. Proton-dependent oligopeptide transporter (POT/PTR) (TC 2.A.17) family. In terms of assembly, interacts (via extracellular domain region) with trypsin. As to expression, expressed in kidney brush border cells (at protein level). Highly expressed in macrophages.

It is found in the apical cell membrane. It localises to the cytoplasmic vesicle. The protein resides in the phagosome membrane. The protein localises to the cell membrane. It carries out the reaction N-acetyl-D-muramoyl-L-alanyl-D-isoglutamine(out) + 3 H(+)(out) = N-acetyl-D-muramoyl-L-alanyl-D-isoglutamine(in) + 3 H(+)(in). It catalyses the reaction a dipeptide(out) + 2 H(+)(out) = a dipeptide(in) + 2 H(+)(in). The enzyme catalyses glycyl-L-leucine(out) + 2 H(+)(out) = glycyl-L-leucine(in) + 2 H(+)(in). The catalysed reaction is glycyl-L-lysine(out) + 2 H(+)(out) = glycyl-L-lysine(in) + 2 H(+)(in). It carries out the reaction glycyl-L-glutamate(out) + 3 H(+)(out) = glycyl-L-glutamate(in) + 3 H(+)(in). It catalyses the reaction L-alanyl-L-alanine(out) + 2 H(+)(out) = L-alanyl-L-alanine(in) + 2 H(+)(in). The enzyme catalyses an L-amino acid tripeptide(out) + 2 H(+)(out) = an L-amino acid tripeptide(in) + 2 H(+)(in). The catalysed reaction is carnosine(out) + 2 H(+)(out) = carnosine(in) + 2 H(+)(in). Its function is as follows. Proton-coupled amino-acid transporter that transports oligopeptides of 2 to 4 amino acids with a preference for dipeptides. Transports neutral and anionic dipeptides with a proton to peptide stoichiometry of 2:1 or 3:1. In kidney, involved in the absorption of circulating di- and tripeptides from the glomerular filtrate. Can also transport beta-lactam antibiotics, such as the aminocephalosporin cefadroxil, and other antiviral and anticancer drugs. Transports the dipeptide-like aminopeptidase inhibitor bestatin. Also able to transport carnosine. Involved in innate immunity by promoting the detection of microbial pathogens by NOD-like receptors (NLRs). Mediates transport of bacterial peptidoglycans across the plasma membrane or, in macrophages, the phagosome membrane: catalyzes the transport of certain bacterial peptidoglycans, such as muramyl dipeptide (MDP), the NOD2 ligand. The polypeptide is Solute carrier family 15 member 2 (Mus musculus (Mouse)).